A 47-amino-acid polypeptide reads, in one-letter code: ATP-dependent zinc metalloprotease FTSH, chloroplastic (47 aa).

In the N-terminal section; belongs to the AAA ATPase family. This sequence in the C-terminal section; belongs to the peptidase M41 family. The cofactor is Zn(2+).

Its subcellular location is the plastid. It is found in the chloroplast membrane. Seems to act as an ATP-dependent zinc metallopeptidase. The polypeptide is ATP-dependent zinc metalloprotease FTSH, chloroplastic (Populus euphratica (Euphrates poplar)).